A 55-amino-acid chain; its full sequence is Large ribosomal subunit protein bL33 (55 aa).

The protein belongs to the bacterial ribosomal protein bL33 family.

This chain is Large ribosomal subunit protein bL33, found in Ruegeria sp. (strain TM1040) (Silicibacter sp.).